The sequence spans 114 residues: Superoxide dismutase [Cu-Zn] (114 aa).

Residues histidine 37, histidine 39, and histidine 54 each contribute to the Cu cation site. Zn(2+)-binding residues include histidine 54, histidine 62, histidine 71, and aspartate 74. A disordered region spans residues histidine 54–alanine 80. Positions asparagine 59–glycine 73 are enriched in basic and acidic residues. Histidine 111 contacts Cu cation.

Belongs to the Cu-Zn superoxide dismutase family. Homodimer. Cu cation serves as cofactor. It depends on Zn(2+) as a cofactor.

The protein localises to the cytoplasm. It carries out the reaction 2 superoxide + 2 H(+) = H2O2 + O2. Its function is as follows. Destroys radicals which are normally produced within the cells and which are toxic to biological systems. This chain is Superoxide dismutase [Cu-Zn], found in Drosophila tolteca (Fruit fly).